A 124-amino-acid chain; its full sequence is Large ribosomal subunit protein bL12 (124 aa).

The protein belongs to the bacterial ribosomal protein bL12 family. In terms of assembly, homodimer. Part of the ribosomal stalk of the 50S ribosomal subunit. Forms a multimeric L10(L12)X complex, where L10 forms an elongated spine to which 2 to 4 L12 dimers bind in a sequential fashion. Binds GTP-bound translation factors.

Its function is as follows. Forms part of the ribosomal stalk which helps the ribosome interact with GTP-bound translation factors. Is thus essential for accurate translation. The polypeptide is Large ribosomal subunit protein bL12 (Burkholderia cenocepacia (strain ATCC BAA-245 / DSM 16553 / LMG 16656 / NCTC 13227 / J2315 / CF5610) (Burkholderia cepacia (strain J2315))).